The chain runs to 554 residues: Dihydroxy-acid dehydratase (554 aa).

Residue Asp78 coordinates Mg(2+). Residue Cys119 participates in [2Fe-2S] cluster binding. 2 residues coordinate Mg(2+): Asp120 and Lys121. Lys121 carries the post-translational modification N6-carboxylysine. Residue Cys191 participates in [2Fe-2S] cluster binding. Glu442 lines the Mg(2+) pocket. The Proton acceptor role is filled by Ser468.

This sequence belongs to the IlvD/Edd family. In terms of assembly, homodimer. It depends on [2Fe-2S] cluster as a cofactor. Requires Mg(2+) as cofactor.

The enzyme catalyses (2R)-2,3-dihydroxy-3-methylbutanoate = 3-methyl-2-oxobutanoate + H2O. It catalyses the reaction (2R,3R)-2,3-dihydroxy-3-methylpentanoate = (S)-3-methyl-2-oxopentanoate + H2O. It functions in the pathway amino-acid biosynthesis; L-isoleucine biosynthesis; L-isoleucine from 2-oxobutanoate: step 3/4. Its pathway is amino-acid biosynthesis; L-valine biosynthesis; L-valine from pyruvate: step 3/4. Functions in the biosynthesis of branched-chain amino acids. Catalyzes the dehydration of (2R,3R)-2,3-dihydroxy-3-methylpentanoate (2,3-dihydroxy-3-methylvalerate) into 2-oxo-3-methylpentanoate (2-oxo-3-methylvalerate) and of (2R)-2,3-dihydroxy-3-methylbutanoate (2,3-dihydroxyisovalerate) into 2-oxo-3-methylbutanoate (2-oxoisovalerate), the penultimate precursor to L-isoleucine and L-valine, respectively. The protein is Dihydroxy-acid dehydratase of Hydrogenobaculum sp. (strain Y04AAS1).